A 234-amino-acid polypeptide reads, in one-letter code: Staphylococcal superantigen-like 5 (234 aa).

Positions 1 to 30 (MKMTAIAKASLALGILATGTITSLHQTVNA) are cleaved as a signal peptide.

This sequence belongs to the staphylococcal/streptococcal toxin family. As to quaternary structure, interacts with host SELPLG; this interaction prevents SELPLG-mediated neutrophil rolling. Interacts with host MMP9 (via sialic acid-containing O-glycans); this interaction inhibits MMP9 activity. Interacts with host GP1BA and GP6; these interactions play an important role in platelet binding and activation.

Its function is as follows. Secreted protein that plays a role in the inhibition of host innate immune system. Modulates the interaction between host SELPLG and P-selectin thereby preventing initial rolling of neutrophils toward the site of infection. Interferes with leukocyte trafficking by inhibiting host metalloproteinase-9/MMP9 activity. Also associates with two different platelet surface receptors GP1A and GP6 leading to platelet activation and aggregation. In Staphylococcus aureus (strain NCTC 8325 / PS 47), this protein is Staphylococcal superantigen-like 5.